A 451-amino-acid polypeptide reads, in one-letter code: Phosphoglucosamine mutase (451 aa).

Residue S102 is the Phosphoserine intermediate of the active site. Mg(2+)-binding residues include S102, D242, D244, and D246. Residue S102 is modified to Phosphoserine.

This sequence belongs to the phosphohexose mutase family. Mg(2+) is required as a cofactor. Activated by phosphorylation.

It carries out the reaction alpha-D-glucosamine 1-phosphate = D-glucosamine 6-phosphate. Catalyzes the conversion of glucosamine-6-phosphate to glucosamine-1-phosphate. The polypeptide is Phosphoglucosamine mutase (Staphylococcus aureus (strain USA300)).